Consider the following 986-residue polypeptide: Mediator of RNA polymerase II transcription subunit 24 (986 aa).

6 short sequence motifs (LXXLL motif) span residues Leu-128–Leu-132, Leu-341–Leu-345, Leu-445–Leu-449, Leu-554–Leu-558, Leu-785–Leu-789, and Leu-855–Leu-859.

It belongs to the Mediator complex subunit 24 family. In terms of assembly, component of the Mediator complex.

The protein resides in the nucleus. Functionally, component of the Mediator complex, a coactivator involved in the regulated transcription of nearly all RNA polymerase II-dependent genes. Mediator functions as a bridge to convey information from gene-specific regulatory proteins to the basal RNA polymerase II transcription machinery. Mediator is recruited to promoters by direct interactions with regulatory proteins and serves as a scaffold for the assembly of a functional preinitiation complex with RNA polymerase II and the general transcription factors. The sequence is that of Mediator of RNA polymerase II transcription subunit 24 (MED24) from Gallus gallus (Chicken).